The following is a 227-amino-acid chain: Germin-like protein 3-3 (227 aa).

The first 26 residues, 1-26 (MECFKTTLAGVVLVVLLLQQAPVLRA), serve as a signal peptide directing secretion. An intrachain disulfide couples Cys36 to Cys51. The 153-residue stretch at 65 to 217 (SRLATGGDVN…ALRVDAGVVE (153 aa)) folds into the Cupin type-1 domain. 2 N-linked (GlcNAc...) asparagine glycosylation sites follow: Asn78 and Asn81. 4 residues coordinate Mn(2+): His114, His116, Glu121, and His163.

Belongs to the germin family. As to quaternary structure, oligomer (believed to be a pentamer but probably hexamer).

The protein resides in the secreted. Its subcellular location is the extracellular space. It localises to the apoplast. In terms of biological role, may play a role in plant defense. Probably has no oxalate oxidase activity even if the active site is conserved. The chain is Germin-like protein 3-3 from Oryza sativa subsp. japonica (Rice).